A 744-amino-acid chain; its full sequence is Tripartite motif-containing protein 2 (744 aa).

At Ser10 the chain carries Phosphoserine. An RING-type zinc finger spans residues 23-64 (CSICLERYKNPKVLPCLHTFCERCLQNYIPAHSLTLSCPVCR). The B box-type zinc-finger motif lies at 113–154 (GKPLSCPNHDGNVMDFYCQSCETAMCRECTEGEHAEHPTVPL). The Zn(2+) site is built by Cys118, His121, Cys141, and His146. Residues 320–421 (TTNAVASETV…IRGSPFKLKV (102 aa)) form a Filamin repeat. Thr371 bears the Phosphothreonine mark. 3 positions are modified to phosphoserine: Ser375, Ser424, and Ser428. The interval 432 to 462 (EGVKRRVKSPGSGHVKQKAVKRPASMYSTGK) is disordered. NHL repeat units follow at residues 473–516 (IFRV…FSND), 520–563 (KSRF…FSSD), 564–605 (GKFK…FQPN), 609–652 (VTRF…FNQE), 656–699 (MLKF…FDGS), and 700–743 (GSFL…YRYL).

The protein belongs to the TRIM/RBCC family. As to quaternary structure, forms homooligomers. Interacts with TRIM3; this interaction reduces TRIM2 activity. Interacts with myosin V; myosin V may not be a substrate for ubiquitination. Interacts with NEFL. Interacts with phosphorylated BCL2L11. Interacts with SIRPA. RING-type zinc finger-dependent and UBE2D1-dependent autoubiquitination.

The protein resides in the cytoplasm. The enzyme catalyses S-ubiquitinyl-[E2 ubiquitin-conjugating enzyme]-L-cysteine + [acceptor protein]-L-lysine = [E2 ubiquitin-conjugating enzyme]-L-cysteine + N(6)-ubiquitinyl-[acceptor protein]-L-lysine.. The protein operates within protein modification; protein ubiquitination. In terms of biological role, UBE2D1-dependent E3 ubiquitin-protein ligase that mediates the ubiquitination of NEFL and of phosphorylated BCL2L11. Plays a neuroprotective function. May play a role in neuronal rapid ischemic tolerance. Plays a role in antiviral immunity and limits New World arenavirus infection independently of its ubiquitin ligase activity. In Bos taurus (Bovine), this protein is Tripartite motif-containing protein 2 (TRIM2).